Here is a 135-residue protein sequence, read N- to C-terminus: MGLTSQLIPALVCLLVCTSHFVHGHKCDITLEEIIKTLNILTSRKNSCMELPVADVFAAPKNATEKETFCRAGIELRRIYRSHMCLNKFLGGLDRNLSSLASKTCSVNEAKTSTSTLRDLLERLKTIMREKYSKC.

The signal sequence occupies residues 1-24; that stretch reads MGLTSQLIPALVCLLVCTSHFVHG. Intrachain disulfides connect Cys-48-Cys-85 and Cys-70-Cys-105. N-linked (GlcNAc...) asparagine glycans are attached at residues Asn-62 and Asn-96.

The protein belongs to the IL-4/IL-13 family.

The protein resides in the secreted. Functionally, participates in at least several B-cell activation processes as well as of other cell types. It is a costimulator of DNA-synthesis. It induces the expression of class II MHC molecules on resting B-cells. It enhances both secretion and cell surface expression of IgE and IgG1. It also regulates the expression of the low affinity Fc receptor for IgE (CD23) on both lymphocytes and monocytes. Positively regulates IL31RA expression in macrophages. Stimulates autophagy in dendritic cells by interfering with mTORC1 signaling and through the induction of RUFY4. This Ovis aries (Sheep) protein is Interleukin-4 (IL4).